Reading from the N-terminus, the 153-residue chain is Large ribosomal subunit protein uL22 (153 aa).

It belongs to the universal ribosomal protein uL22 family. In terms of assembly, part of the 50S ribosomal subunit.

Its function is as follows. This protein binds specifically to 23S rRNA. It makes multiple contacts with different domains of the 23S rRNA in the assembled 50S subunit and ribosome. In terms of biological role, the globular domain of the protein is located near the polypeptide exit tunnel on the outside of the subunit, while an extended beta-hairpin is found that lines the wall of the exit tunnel in the center of the 70S ribosome. The polypeptide is Large ribosomal subunit protein uL22 (Methanococcus maripaludis (strain C5 / ATCC BAA-1333)).